We begin with the raw amino-acid sequence, 275 residues long: Diaminopimelate epimerase (275 aa).

Positions 12, 45, and 65 each coordinate substrate. Cysteine 74 acts as the Proton donor in catalysis. Residues 75–76 (GN), asparagine 158, asparagine 191, and 209–210 (ER) each bind substrate. Cysteine 218 (proton acceptor) is an active-site residue. 219-220 (GT) lines the substrate pocket.

Belongs to the diaminopimelate epimerase family. In terms of assembly, homodimer.

It is found in the cytoplasm. It carries out the reaction (2S,6S)-2,6-diaminopimelate = meso-2,6-diaminopimelate. The protein operates within amino-acid biosynthesis; L-lysine biosynthesis via DAP pathway; DL-2,6-diaminopimelate from LL-2,6-diaminopimelate: step 1/1. Catalyzes the stereoinversion of LL-2,6-diaminopimelate (L,L-DAP) to meso-diaminopimelate (meso-DAP), a precursor of L-lysine and an essential component of the bacterial peptidoglycan. The protein is Diaminopimelate epimerase of Shewanella frigidimarina (strain NCIMB 400).